The following is a 271-amino-acid chain: Structure-specific endonuclease subunit slx1 (271 aa).

The region spanning 5–87 is the GIY-YIG domain; that stretch reads NFYCCYLLKS…QNLGISRYTK (83 aa). The SLX1-type zinc finger occupies 180–231; it reads CNLCYECIESDELRANCPFTDCNSINHLTCLASSFLTEECQVLPIEGMCTKC.

It belongs to the SLX1 family. Forms a heterodimer with slx4. The cofactor is Mg(2+). Requires Mn(2+) as cofactor.

The protein resides in the nucleus. It localises to the nucleolus. Its function is as follows. Catalytic subunit of the slx1-slx4 structure-specific endonuclease that resolves DNA secondary structures generated during DNA repair and recombination. Has endonuclease activity towards branched DNA substrates, introducing single-strand cuts in duplex DNA close to junctions with ss-DNA. Has a preference for stem-loop (SL) and splayed arm Y structures. Introduces a single-strand cut in duplex DNA on the 3' side of a double-strand/single-strand junction with respect to the single-strand moving 3' to 5' away from the junction. Plays a critical role in maintaining the integrity of the ribosomal DNA (rDNA) loci, where it has a role in re-starting stalled replication forks. The complex initiates homologous recombination (HR) events, used to maintain rDNA copy number, in the rDNA repeats that are processed by a mechanism that requires rad22, but not rhp51. It is also required for suppression of methyl methanesulfonate (MMS) and UV-C irradiation hypersensitivity of the structural maintenance of chromosome (SMC) protein mutant, smc6-74, by overexpression of brc1. Has Holliday junction resolvase activity in vitro. The sequence is that of Structure-specific endonuclease subunit slx1 from Schizosaccharomyces pombe (strain 972 / ATCC 24843) (Fission yeast).